Consider the following 444-residue polypeptide: Glutamyl-tRNA reductase (444 aa).

Residues 49 to 52 (TCNR), S109, 114 to 116 (ETQ), and Q120 each bind substrate. The active-site Nucleophile is C50. 189 to 194 (GAGKMG) lines the NADP(+) pocket.

It belongs to the glutamyl-tRNA reductase family. Homodimer.

The catalysed reaction is (S)-4-amino-5-oxopentanoate + tRNA(Glu) + NADP(+) = L-glutamyl-tRNA(Glu) + NADPH + H(+). Its pathway is porphyrin-containing compound metabolism; protoporphyrin-IX biosynthesis; 5-aminolevulinate from L-glutamyl-tRNA(Glu): step 1/2. Its function is as follows. Catalyzes the NADPH-dependent reduction of glutamyl-tRNA(Glu) to glutamate 1-semialdehyde (GSA). This Bacillus cereus (strain ATCC 10987 / NRS 248) protein is Glutamyl-tRNA reductase.